We begin with the raw amino-acid sequence, 462 residues long: uncharacterized protein (462 aa).

The next 2 membrane-spanning stretches (helical) occupy residues Trp12–Val32 and Gly257–Val277.

This sequence belongs to the HHV-5 US29 protein family.

Its subcellular location is the host membrane. This is an uncharacterized protein from Homo sapiens (Human).